We begin with the raw amino-acid sequence, 950 residues long: A disintegrin and metalloproteinase with thrombospondin motifs 15 (950 aa).

The signal sequence occupies residues 1-18 (MLLLGISILALAWRPAGS). A propeptide spanning residues 19–212 (SEPEWEVVVP…NRRRSGRAKR (194 aa)) is cleaved from the precursor. Asparagine 141 is a glycosylation site (N-linked (GlcNAc...) asparagine). Residues 144–172 (APEAQRHSQGAHLLQRRGAPVGPSGDPTS) are disordered. Residues 172-179 (SRCGVASG) carry the Cysteine switch motif. Cysteine 174 contacts Zn(2+). One can recognise a Peptidase M12B domain in the interval 218–427 (RYVETLVVAD…GHGDCLLDQP (210 aa)). 11 disulfides stabilise this stretch: cysteine 293–cysteine 345, cysteine 322–cysteine 327, cysteine 339–cysteine 422, cysteine 377–cysteine 406, cysteine 448–cysteine 470, cysteine 459–cysteine 480, cysteine 465–cysteine 499, cysteine 493–cysteine 504, cysteine 528–cysteine 565, cysteine 532–cysteine 570, and cysteine 543–cysteine 555. Histidine 361 serves as a coordination point for Zn(2+). Residue glutamate 362 is part of the active site. Residues histidine 365 and histidine 371 each coordinate Zn(2+). One can recognise a Disintegrin domain in the interval 428 to 515 (SKPITLPEDL…ERHNPNKYRV (88 aa)). Residues 516-571 (DGSWAKWEPYGSCSRTCGGGVQLARRQCSNPTPANGGKYCEGVRVKYRSCNLEPCP) enclose the TSP type-1 1 domain. N-linked (GlcNAc...) asparagine glycans are attached at residues asparagine 591, asparagine 623, and asparagine 679. Residues 701–838 (AIPAGASSID…SNQVEQPDNR (138 aa)) form a spacer region. The segment at 798–822 (FYLPKEPREDKSTRPKDPRGSPVLR) is disordered. The segment covering 802–816 (KEPREDKSTRPKDPR) has biased composition (basic and acidic residues). 2 consecutive TSP type-1 domains span residues 839 to 895 (PPAR…EPCP) and 896 to 949 (TWEL…VLRP).

The cofactor is Zn(2+). The precursor is cleaved by a furin endopeptidase. In terms of processing, glycosylated. Can be O-fucosylated by POFUT2 on a serine or a threonine residue found within the consensus sequence C1-X(2)-(S/T)-C2-G of the TSP type-1 repeat domains where C1 and C2 are the first and second cysteine residue of the repeat, respectively. Fucosylated repeats can then be further glycosylated by the addition of a beta-1,3-glucose residue by the glucosyltransferase, B3GALTL. Fucosylation mediates the efficient secretion of ADAMTS family members. Can be C-glycosylated with one or two mannose molecules on tryptophan residues within the consensus sequence W-X-X-W of the TPRs. Also N-glycosylated. These other glycosylations can also facilitate secretion. In the adult colon, highly expressed in the muscularis externa (inner circular smooth muscle and outer longitudinal smooth muscle), muscularis mucosa, submucosal glands, crypt, villi epithelial cells, goblet cells and lamina propria. Expressed at perimuscular and peritendious areas in the developing limbs.

The protein resides in the secreted. The protein localises to the extracellular space. It is found in the extracellular matrix. Its subcellular location is the cell surface. In terms of biological role, metalloprotease which has proteolytic activity against the proteoglycan VCAN, cleaving it at the 'Glu-1401-|-1402-Ala' site. Cleaves VCAN in the pericellular matrix surrounding myoblasts, facilitating myoblast contact and fusion which is required for skeletal muscle development and regeneration. This Mus musculus (Mouse) protein is A disintegrin and metalloproteinase with thrombospondin motifs 15 (Adamts15).